The primary structure comprises 568 residues: uncharacterized protein (568 aa).

Positions 334 to 346 (DDNEEKNNDRPKI) are enriched in basic and acidic residues. Disordered stretches follow at residues 334–382 (DDNE…NDQN) and 436–479 (QVEE…SCKN). Positions 458 to 477 (KIASSASKNDNSNNKNSKSC) are enriched in low complexity.

To yeast YJL043w.

This is an uncharacterized protein from Saccharomyces cerevisiae (strain ATCC 204508 / S288c) (Baker's yeast).